The chain runs to 589 residues: MAHELSAGSVFAGYRIERMLGAGGMGTVYLARNPDLPRSEALKVLAAELSRDLDFRARFVREADVAAGLDHPNIVAVHQRGQFEGRLWIAMQFVDGGNAEDALRAATMTTARAVYVIGEVAKALDYAHQQGVIHRDIKPANFLLSRAAGGDERVLLSDFGIARALGDTGLTSTGSVLATLAYAAPEVLAGQGFDGRADLYSLGCALFRLLTGEAPFAAGAGAAVAVVAGHLHQPPPTVSDRVPGLSAAMDAVIATAMAKDPMRRFTSAGEFAHAAAAALYGGATDGWVPPSPAPHVISQGAVPGSPWWQHPVGSVTALATPPGHGWPPGLPPLPRRPRRYRRGVAAVAAVMVVAAAAVTAVTMTSHQPRTATPPSAAALSPTSSSTTPPQPPIVTRSRLPGLLPPLDDVKNFVGIQNLVAHEPMLQPQTPNGSINPAECWPAVGGGVPSAYDLGTVIGFYGLTIDEPPTGTAPNQVGQLIVAFRDAATAQRHLADLASIWRRCGGRTVTLFRSEWRRPVELSTSVPEVVDGITTMVLTAQGPVLRVREDHAIAAKNNVLVDVDIMTPDTSRGQQAVIGITNYILAKIPG.

Over 1–342 (MAHELSAGSV…LPRRPRRYRR (342 aa)) the chain is Cytoplasmic. Residues 14-276 (YRIERMLGAG…SAGEFAHAAA (263 aa)) enclose the Protein kinase domain. ATP contacts are provided by residues 20–28 (LGAGGMGTV) and Lys43. Residue Asp136 is the Proton acceptor of the active site. A helical membrane pass occupies residues 343–363 (GVAAVAAVMVVAAAAVTAVTM). Over 364–589 (TSHQPRTATP…TNYILAKIPG (226 aa)) the chain is Extracellular. The segment covering 365–387 (SHQPRTATPPSAAALSPTSSSTT) has biased composition (low complexity). Positions 365 to 400 (SHQPRTATPPSAAALSPTSSSTTPPQPPIVTRSRLP) are disordered.

This sequence belongs to the protein kinase superfamily. Ser/Thr protein kinase family. As to quaternary structure, homodimer.

The protein resides in the cell membrane. The enzyme catalyses L-seryl-[protein] + ATP = O-phospho-L-seryl-[protein] + ADP + H(+). It catalyses the reaction L-threonyl-[protein] + ATP = O-phospho-L-threonyl-[protein] + ADP + H(+). The polypeptide is Serine/threonine-protein kinase PknJ (pknJ) (Mycobacterium bovis (strain ATCC BAA-935 / AF2122/97)).